The chain runs to 332 residues: 2-oxoglutarate-dependent dioxygenase ecdK (332 aa).

Positions 178 to 294 (HASELRLNHY…RRSVAFFLKP (117 aa)) constitute a Fe2OG dioxygenase domain. Fe cation is bound by residues histidine 206, aspartate 208, and histidine 266. Arginine 285 is a 2-oxoglutarate binding site.

Belongs to the iron/ascorbate-dependent oxidoreductase family. The cofactor is Fe(2+).

It functions in the pathway antifungal biosynthesis. 2-oxoglutarate-dependent dioxygenase; part of the gene cluster that mediates the biosynthesis of echinocandin B, a fungal lipidated cyclic hexapeptide that acts as an antifungal agent. Linoleoyl-AMP, produced by the fatty-acyl-AMP ligase ecdI, is transferred to the initiation carrier domain (T0) of ecdA. The linoleoyl-S-phosphopantetheinyl-T0 is sequentially extended with L-ornithine, L-threonine, L-proline, L-homotyrosine, L-threonine, and 4R-methyl-L-proline to form the linear hexapeptide. Thereafter, the terminal condensation (C7) performs macrocyclization of the NRPS product and the cyclic scaffold is released from ecdA. All six of the amino acid residues are hydroxylated, including 4R,5R-dihydroxy-L-ornithine, 4R-hydroxyl-L-proline, 3S,4S-dihydroxy-L-homotyrosine, and 3S-hydroxyl-4S-methyl-L-prolin. In the pathway, all the hydroxylation reactions are proposed to occur following completion of the cyclic peptide, so the unhydroxylated precursor produced by ecdA will undergo six rounds of hydroxylation. Five hydroxylase genes (ecdG, ecdH, ecdK, htyE and htyF) are embedded within the echinocandin B (ecd) and L-homotyrosine (hty) clusters. This is 2-oxoglutarate-dependent dioxygenase ecdK from Aspergillus rugulosus (Emericella rugulosa).